The sequence spans 334 residues: Leukocyte cell-derived chemotaxin 1 (334 aa).

Residues 46–66 (VVLISGAVLLLFGAIGAFYFW) form a helical membrane-spanning segment. One can recognise a BRICHOS domain in the interval 105 to 201 (GSGAEEAIEV…LCGDLPIFWL (97 aa)). An intrachain disulfide couples Cys132 to Cys193. The propeptide occupies 211 to 214 (RERR). A disordered region spans residues 212–270 (ERREVVRNSAPSTTRRPHSEPRGNAGPGRLSNGTRPNVQDDAEPFNPDNPYHQQEGESM). An N-linked (GlcNAc...) asparagine glycan is attached at Asn243. Disulfide bonds link Cys282–Cys286, Cys283–Cys323, Cys293–Cys317, and Cys297–Cys313.

It belongs to the chondromodulin-1 family. After cleavage, the post-translationally modified ChM-I is secreted as a glycoprotein. As to expression, detected in the four cardiac valves, valvular interstitial cells and extracellular matrix (at protein level).

It localises to the secreted. The protein resides in the extracellular space. Its subcellular location is the extracellular matrix. The protein localises to the endomembrane system. In terms of biological role, bifunctional growth regulator that stimulates the growth of cultured chondrocytes in the presence of basic fibroblast growth factor (FGF) but inhibits the growth of cultured vascular endothelial cells. May contribute to the rapid growth of cartilage and vascular invasion prior to the replacement of cartilage by bone during endochondral bone development. Inhibits in vitro tube formation and mobilization of endothelial cells. Plays a role as antiangiogenic factor in cardiac valves to suppress neovascularization. This is Leukocyte cell-derived chemotaxin 1 from Mus musculus (Mouse).